A 304-amino-acid chain; its full sequence is N-acetylmuramic acid 6-phosphate etherase (304 aa).

Ser2 is modified (phosphoserine). The SIS domain occupies 59 to 222 (AYESFQNGGR…STAVMVKIGK (164 aa)). The active-site Proton donor is Glu87. The active site involves Glu118.

Belongs to the GCKR-like family. MurNAc-6-P etherase subfamily. As to quaternary structure, homodimer.

The catalysed reaction is N-acetyl-D-muramate 6-phosphate + H2O = N-acetyl-D-glucosamine 6-phosphate + (R)-lactate. It participates in amino-sugar metabolism; N-acetylmuramate degradation. Specifically catalyzes the cleavage of the D-lactyl ether substituent of MurNAc 6-phosphate, producing GlcNAc 6-phosphate and D-lactate. The protein is N-acetylmuramic acid 6-phosphate etherase of Bacillus subtilis (strain 168).